Consider the following 497-residue polypeptide: Aspartyl/glutamyl-tRNA(Asn/Gln) amidotransferase subunit B (497 aa).

It belongs to the GatB/GatE family. GatB subfamily. Heterotrimer of A, B and C subunits.

It carries out the reaction L-glutamyl-tRNA(Gln) + L-glutamine + ATP + H2O = L-glutaminyl-tRNA(Gln) + L-glutamate + ADP + phosphate + H(+). The enzyme catalyses L-aspartyl-tRNA(Asn) + L-glutamine + ATP + H2O = L-asparaginyl-tRNA(Asn) + L-glutamate + ADP + phosphate + 2 H(+). Its function is as follows. Allows the formation of correctly charged Asn-tRNA(Asn) or Gln-tRNA(Gln) through the transamidation of misacylated Asp-tRNA(Asn) or Glu-tRNA(Gln) in organisms which lack either or both of asparaginyl-tRNA or glutaminyl-tRNA synthetases. The reaction takes place in the presence of glutamine and ATP through an activated phospho-Asp-tRNA(Asn) or phospho-Glu-tRNA(Gln). The polypeptide is Aspartyl/glutamyl-tRNA(Asn/Gln) amidotransferase subunit B (Nocardioides sp. (strain ATCC BAA-499 / JS614)).